The following is a 272-amino-acid chain: Protein FAM210A (272 aa).

Residues 117–229 (DKSISLYQRF…GYMSTPPPVK (113 aa)) form the DUF1279 domain. Residues 136 to 156 (VLIPVHLITSGVWFGTFYYAA) traverse the membrane as a helical segment. Residues 229 to 271 (KEYLQDRMEETKELITEKMEETKDRLTEKLQETKEKVSFKKKV) adopt a coiled-coil conformation. The segment at 246–272 (KMEETKDRLTEKLQETKEKVSFKKKVE) is disordered.

This sequence belongs to the FAM210 family. Interacts with ATAD3A.

Its subcellular location is the membrane. It is found in the mitochondrion. The protein resides in the cytoplasm. Functionally, may play a role in the structure and strength of both muscle and bone. This is Protein FAM210A (FAM210A) from Homo sapiens (Human).